A 301-amino-acid chain; its full sequence is G-protein coupled receptor homolog U51 (301 aa).

Residues 1 to 15 (MEKETKSLAWPATAE) are Extracellular-facing. The helical transmembrane segment at 16-36 (FYGWVFIFSSIQLCTMVLLTV) threads the bilayer. The Cytoplasmic segment spans residues 37 to 48 (RFNSFKVGREYA). A helical transmembrane segment spans residues 49-69 (VFTFAGMSFNCFLLPIKMGLL). Residues 70–82 (SGHWSLPRDFCAI) lie on the Extracellular side of the membrane. Residues 83-103 (LLYIDDFSIYFSSWSLVFMAI) traverse the membrane as a helical segment. Topologically, residues 104–122 (ERINHFCYSTPLLNENSKA) are cytoplasmic. A helical membrane pass occupies residues 123 to 143 (LAKVCFPIVWIISGVQALQML). Over 144 to 168 (NNYKATALQNETPQCFLAFLRSGYD) the chain is Extracellular. Residues 169-189 (MWLMLVYSVMIPVMLVFIYIY) traverse the membrane as a helical segment. At 190–199 (SKNFMLLKDE) the chain is on the cytoplasmic side. A helical transmembrane segment spans residues 200 to 220 (LSTVTTYLCIYLLLGTIAHLP). Residues 221 to 238 (KAGLSEIESDKIFYGLRD) are Extracellular-facing. The chain crosses the membrane as a helical span at residues 239–259 (IFMALPVLKVYYIPVMAYCMA). The Cytoplasmic portion of the chain corresponds to 260–301 (CDDHTVPVRLCSIWLVNLCKKCFSCTRREKESDLEVGIKMLK).

It belongs to the G-protein coupled receptor 1 family.

It localises to the host cell membrane. The protein is G-protein coupled receptor homolog U51 (U51) of Homo sapiens (Human).